Reading from the N-terminus, the 123-residue chain is Large ribosomal subunit protein bL12 (123 aa).

It belongs to the bacterial ribosomal protein bL12 family. As to quaternary structure, homodimer. Part of the ribosomal stalk of the 50S ribosomal subunit. Forms a multimeric L10(L12)X complex, where L10 forms an elongated spine to which 2 to 4 L12 dimers bind in a sequential fashion. Binds GTP-bound translation factors.

Forms part of the ribosomal stalk which helps the ribosome interact with GTP-bound translation factors. Is thus essential for accurate translation. This is Large ribosomal subunit protein bL12 from Roseobacter denitrificans (strain ATCC 33942 / OCh 114) (Erythrobacter sp. (strain OCh 114)).